The following is a 229-amino-acid chain: Matrix protein (229 aa).

Low complexity predominate over residues 1-12 (MSSFKKILGLSS). The tract at residues 1 to 35 (MSSFKKILGLSSKSHKKSKKMGLPPPYDESCPMET) is disordered. Residues 2-4 (SSF) carry the dynamin binding motif. The PPXY motif motif lies at 24–27 (PPPY). The PTAP/PSAP motif motif lies at 37-40 (PSAP).

Belongs to the vesiculoviruses matrix protein family. Homomultimer. Interacts with viral nucleocapsid; this interaction contributes to the virion assembly. Interacts with the viral envelope glycoprotein; this interaction contributes to the virion assembly. Interacts with host RAE1-NUP98 complex. Interacts with host NEDD4 and TSG101. Interacts with host dynamin. Interacts with host NDUFAF4; the interaction inhibits viral propagation and is independent of interferon activation. Interacts with host GTF2H5; the interaction may inhibit host transcription. Post-translationally, phosphorylated by host.

Its subcellular location is the virion. The protein localises to the host endomembrane system. The protein resides in the host nucleus membrane. It is found in the host nucleus. It localises to the host cytoplasm. Forms a double layer around the helical nucleocapsid, the inner matrix layer binding to the N helix and the outer matrix layer binding to the envelope glycoprotein. Plays a major role in assembly and budding of virion, by recruiting cellular partners of the ESCRT complexes that play a key role in releasing the budding particle from the host membrane. Condensates the ribonucleocapsid core during virus assembly. Inhibits the host mRNA nuclear export thereby inducing the shut off of cellular transcription and preventing the interferon signaling and the establishment of antiviral state in infected cells. This shutoff presumably inhibits interferon signaling and thus establishment of antiviral state in virus infected cells. Induces cell-rounding, cytoskeleton disorganization and apoptosis in infected cell. Inhibits host transcription, possibly through interaction with host DNA repair factor IIH/TFIIH GTF2H5 subunit. The sequence is that of Matrix protein (M) from Aedes (Bovine).